The chain runs to 931 residues: Translation initiation factor IF-2 (931 aa).

The tract at residues 32–310 is disordered; it reads KSASSTVEPP…SSKARKNRLA (279 aa). Residues 50 to 59 show a composition bias toward polar residues; sequence FASSGQGNAS. The segment covering 82 to 96 has biased composition (pro residues); it reads PAAPSAPKPAAPAAP. The span at 156–168 shows a compositional bias: low complexity; it reads GNAPQGGNNANGA. Composition is skewed to gly residues over residues 217–238, 248–271, and 281–298; these read RPGQ…GGAK, GQGG…GFQG, and ARGG…GRQG. In terms of domain architecture, tr-type G spans 424–596; that stretch reads PRPPVVTVMG…VLLTADAELD (173 aa). The tract at residues 433-440 is G1; sequence GHVDHGKT. 433–440 serves as a coordination point for GTP; the sequence is GHVDHGKT. Residues 458–462 form a G2 region; it reads GITQR. A G3 region spans residues 483–486; it reads DTPG. GTP-binding positions include 483–487 and 537–540; these read DTPGH and NKID. The segment at 537–540 is G4; the sequence is NKID. Residues 573-575 form a G5 region; that stretch reads SAK.

It belongs to the TRAFAC class translation factor GTPase superfamily. Classic translation factor GTPase family. IF-2 subfamily.

The protein resides in the cytoplasm. One of the essential components for the initiation of protein synthesis. Protects formylmethionyl-tRNA from spontaneous hydrolysis and promotes its binding to the 30S ribosomal subunits. Also involved in the hydrolysis of GTP during the formation of the 70S ribosomal complex. The protein is Translation initiation factor IF-2 of Bifidobacterium adolescentis (strain ATCC 15703 / DSM 20083 / NCTC 11814 / E194a).